Consider the following 88-residue polypeptide: Small ribosomal subunit protein bS20 (88 aa).

Disordered stretches follow at residues 1 to 22 (MPNI…AQNA) and 69 to 88 (KNAA…GLSA).

This sequence belongs to the bacterial ribosomal protein bS20 family.

Binds directly to 16S ribosomal RNA. The sequence is that of Small ribosomal subunit protein bS20 from Shouchella clausii (strain KSM-K16) (Alkalihalobacillus clausii).